The primary structure comprises 104 residues: Integration host factor subunit beta (104 aa).

This sequence belongs to the bacterial histone-like protein family. In terms of assembly, heterodimer of an alpha and a beta chain.

Its function is as follows. This protein is one of the two subunits of integration host factor, a specific DNA-binding protein that functions in genetic recombination as well as in transcriptional and translational control. The sequence is that of Integration host factor subunit beta (ihfB) from Neisseria gonorrhoeae.